The primary structure comprises 586 residues: Glutathione hydrolase 5 proenzyme (586 aa).

Residues 1 to 8 (MARGYGAT) lie on the Cytoplasmic side of the membrane. The helical; Signal-anchor for type II membrane protein transmembrane segment at 9–29 (VSLVLLGLGLALAVIVLAVVL) threads the bilayer. Residues 30-586 (SRHQAPCGPQ…LRKSGEAAGY (557 aa)) lie on the Extracellular side of the membrane. The N-linked (GlcNAc...) asparagine glycan is linked to Asn98. Position 110 (Arg110) interacts with L-glutamate. N-linked (GlcNAc...) asparagine glycans are attached at residues Asn204, Asn303, and Asn347. Thr388 (nucleophile) is an active-site residue. L-glutamate is bound by residues Thr406, Glu427, and 469–470 (SS). N-linked (GlcNAc...) asparagine glycans are attached at residues Asn535 and Asn550.

The protein belongs to the gamma-glutamyltransferase family. In terms of assembly, heterodimer composed of the light and heavy chains. The active site is located in the light chain. In terms of processing, cleaved by autocatalysis into a large and a small subunit. Post-translationally, glycosylated. Expressed in follicular dendritic cells in lymphoid follicles (at protein level).

The protein localises to the membrane. It catalyses the reaction glutathione + H2O = L-cysteinylglycine + L-glutamate. The enzyme catalyses an S-substituted glutathione + H2O = an S-substituted L-cysteinylglycine + L-glutamate. The catalysed reaction is leukotriene C4 + H2O = leukotriene D4 + L-glutamate. It carries out the reaction S-[(2E,6E,10E)-geranylgeranyl]-L-glutathione + H2O = S-[(2E,6E,10E)-geranylgeranyl]-L-cysteinylglycine + L-glutamate. It catalyses the reaction an N-terminal (5-L-glutamyl)-[peptide] + an alpha-amino acid = 5-L-glutamyl amino acid + an N-terminal L-alpha-aminoacyl-[peptide]. Its pathway is sulfur metabolism; glutathione metabolism. The protein operates within lipid metabolism; leukotriene D4 biosynthesis. With respect to regulation, inhibited by serine-borate. In terms of biological role, cleaves the gamma-glutamyl bond of extracellular glutathione tripeptide (gamma-Glu-Cys-Gly) and certain glutathione conjugates. Hydrolyzes glutathione releasing L-Glu and Cys-Gly dipeptide which is further metabolized to maintain extracellular cysteine levels but also to provide cysteine necessary for intracellular glutathione synthesis. Among glutathione-S-conjugates metabolizes leukotriene C4 (LTC4) and S-geranylgeranyl-glutathione (GGG), but is inactive toward gamma-glutamyl leucine. Converts extracellular LTC4 to LTD4 during acute inflammatory response. Acts as a negative regulator of GGG bioactivity. GGT5 (via GGG catabolism) and ABCC1 (via extracellular transport) establish GGG gradients within lymphoid tissues to position P2RY8-positive lymphocytes at germinal centers in lymphoid follicles and restrict their chemotactic transmigration from blood vessels to bone marrow parenchyma. The transpeptidation reaction, i.e. the transfer of gamma-glutamyl moiety to an acceptor molecule to yield a new gamma-glutamyl compound requires high concentration of dipeptide acceptor and is considered nonphysiological. The protein is Glutathione hydrolase 5 proenzyme (GGT5) of Homo sapiens (Human).